A 329-amino-acid chain; its full sequence is Bifunctional nuclease 2 (329 aa).

The BFN domain occupies 121 to 256 (CVHNNPQGGN…YLAYSDGMRV (136 aa)). The region spanning 287-322 (DTKEFDLVRNMMQAVDEERYDEAAEWRDKLGKFQAK) is the UVR domain.

It belongs to the bifunctional nuclease family.

Its subcellular location is the nucleus. In terms of biological role, bifunctional nuclease with both RNase and DNase activities. Involved in basal defense response. Participates in abscisic acid-derived callose deposition following infection by a necrotrophic pathogen. The sequence is that of Bifunctional nuclease 2 (BBD2) from Arabidopsis thaliana (Mouse-ear cress).